Reading from the N-terminus, the 281-residue chain is Nucleotide-binding protein DNO_0399 (281 aa).

6–13 (GMSGAGKS) is a binding site for ATP. 55–58 (DARN) lines the GTP pocket.

The protein belongs to the RapZ-like family.

In terms of biological role, displays ATPase and GTPase activities. This chain is Nucleotide-binding protein DNO_0399, found in Dichelobacter nodosus (strain VCS1703A).